We begin with the raw amino-acid sequence, 90 residues long: UPF0335 protein R02793 (90 aa).

It belongs to the UPF0335 family.

In Rhizobium meliloti (strain 1021) (Ensifer meliloti), this protein is UPF0335 protein R02793.